The primary structure comprises 62 residues: DNA-binding protein 7b (62 aa).

The protein belongs to the 7 kDa DNA-binding/endoribonuclease P2 family. In terms of assembly, monomer.

It is found in the cytoplasm. In terms of biological role, can constrain negative DNA supercoils. May be involved in maintaining the integrity of the genome at high temperature. The chain is DNA-binding protein 7b from Acidianus hospitalis (strain W1).